Here is a 119-residue protein sequence, read N- to C-terminus: Ergochrome gene cluster protein CPUR_05426 (119 aa).

It functions in the pathway pigment biosynthesis. Its function is as follows. Part of the ergochrome gene cluster responsible for the typical purple-black color of the ergot sclerotia. The ergochrome gene cluster produces several ergot pigments including the yellow ergochrome secalonic acid and its derivatives, as well as the red anthraquinones endocrocin and clavorubin. The pathway begins with the synthesis of atrochrysone thioester by the polyketide synthase (PKS) CPUR_05437. The atrochrysone carboxyl ACP thioesterase CPUR_05436 then breaks the thioester bond and releases the atrochrysone carboxylic acid from CPUR_05437. The atrochrysone carboxylic acid is then converted to atrochrysone which is further transformed into emodin anthrone. The next step is performed by the anthrone oxygenase CPUR_05434 that catalyzes the oxidation of emodinanthrone to emodin. Emodin is further modified to yield monodictyphenone via several steps involving CPUR_05427, CPUR_05428, CPUR_05429 and CPUR_05430. The short chain dehydrogenase/reductase CPUR_05418 then catalyzes the C-5 ketoreduction to give the xanthone skeleton of the monomeric units. Ergochromes formation requires further dimerization steps of different xanthone units, probably catalyzed by the cytochrome P450 monooxygenase CPUR_05419. CPUR_05425, CPUR_05426 and CPUR_05431 are unique to Claviceps, thus it is likely that they are involved in further modification of xanthone units or in their dimerization. The yellow ergochromes and the red anthraquinone pigments endocrocin and clavorubin are products from the same PKS derived precursors and the latter are likely shunt products in the pathway of xanthone biosynthesis. It is proposed that atrochrysone carboxylic acid released from the PKS CPUR_05437 can also be converted to endocrocin anthrone which is further oxidized into endocrocin by CPUR_05435. Endocrocin could be then modified to clavorubin, possibly by CPUR_05423 and CPUR_05431. Clavorubin is the principal anthraquinone metabolite produced by the cluster with a much higher yield compared to endocrocin. This chain is Ergochrome gene cluster protein CPUR_05426, found in Claviceps purpurea (strain 20.1) (Ergot fungus).